The primary structure comprises 235 residues: Large ribosomal subunit protein uL1 (235 aa).

The protein belongs to the universal ribosomal protein uL1 family. In terms of assembly, part of the 50S ribosomal subunit.

In terms of biological role, binds directly to 23S rRNA. The L1 stalk is quite mobile in the ribosome, and is involved in E site tRNA release. Functionally, protein L1 is also a translational repressor protein, it controls the translation of the L11 operon by binding to its mRNA. This is Large ribosomal subunit protein uL1 from Mycobacterium sp. (strain JLS).